The following is a 298-amino-acid chain: ADP/ATP translocase 1 (298 aa).

Over 1 to 7 the chain is Mitochondrial intermembrane; sequence MGDQALS. Glycine 2 carries the N-acetylglycine modification. One copy of the Solcar 1 repeat lies at 6–98; sequence LSFLKDFLAG…FAFKDKYKQI (93 aa). Serine 7 is modified (phosphoserine). The chain crosses the membrane as a helical span at residues 8–37; the sequence is FLKDFLAGGIAAAVSKTAVAPIERVKLLLQ. The Mitochondrial matrix portion of the chain corresponds to 38-74; the sequence is VQHASKQISAEKQYKGIIDCVVRIPKEQGFLSFWRGN. Lysine 52 bears the N6,N6,N6-trimethyllysine mark. Residues 75-99 form a helical membrane-spanning segment; it reads LANVIRYFPTQALNFAFKDKYKQIF. Residues arginine 80 and lysine 92 each contribute to the ADP site. The Mitochondrial intermembrane segment spans residues 100 to 109; it reads LGGVDRHKQF. The chain crosses the membrane as a helical span at residues 110 to 130; it reads WRYFAGNLASGGAAGATSLCF. Solcar repeat units follow at residues 111-201 and 212-297; these read RYFA…AKGM and VSWM…IKKY. Residues 131-178 lie on the Mitochondrial matrix side of the membrane; sequence VYPLDFARTRLAADVGKGSSQREFNGLGDCLTKIFKSDGLKGLYQGFS. The residue at position 147 (lysine 147) is an N6-succinyllysine. Serine 149 and serine 150 each carry phosphoserine. Position 160 is an S-nitrosocysteine (cysteine 160). Residues 179–199 traverse the membrane as a helical segment; that stretch reads VSVQGIIIYRAAYFGVYDTAK. At 200–210 the chain is on the mitochondrial intermembrane side; sequence GMLPDPKNVHI. The chain crosses the membrane as a helical span at residues 211-231; it reads IVSWMIAQSVTAVAGLVSYPF. Topologically, residues 232 to 273 are mitochondrial matrix; that stretch reads DTVRRRMMMQSGRKGADIMYTGTVDCWRKIAKDEGRKAFFKG. Arginine 235 contacts ADP. The important for transport activity stretch occupies residues 235 to 240; the sequence is RRRMMM. A Nucleotide carrier signature motif motif is present at residues 235–240; that stretch reads RRRMMM. An N6-succinyllysine mark is found at lysine 245 and lysine 272. The helical transmembrane segment at 274 to 291 threads the bilayer; it reads AWSNVLRGMGGAFVLVLY. At 292–298 the chain is on the mitochondrial intermembrane side; the sequence is DEIKKYV.

The protein belongs to the mitochondrial carrier (TC 2.A.29) family. In terms of assembly, monomer. Found in a complex with ARL2, ARL2BP and SLC25A4/ANT1. Interacts with ARL2BP. Interacts with TIMM44; leading to inhibit the presequence translocase TIMM23, thereby promoting stabilization of PINK1. Post-translationally, under cell death induction, transglutaminated by TGM2. Transglutamination leads to formation of covalent cross-links between a glutamine and the epsilon-amino group of a lysine residue, forming polymers.

The protein resides in the mitochondrion inner membrane. Its subcellular location is the membrane. It carries out the reaction ADP(in) + ATP(out) = ADP(out) + ATP(in). The enzyme catalyses H(+)(in) = H(+)(out). The matrix-open state (m-state) is inhibited by the membrane-permeable bongkrekic acid (BKA). The cytoplasmic-open state (c-state) is inhibited by the membrane-impermeable toxic inhibitor carboxyatractyloside (CATR). Proton transporter activity is inhibited by ADP:ATP antiporter activity. Its function is as follows. ADP:ATP antiporter that mediates import of ADP into the mitochondrial matrix for ATP synthesis, and export of ATP out to fuel the cell. Cycles between the cytoplasmic-open state (c-state) and the matrix-open state (m-state): operates by the alternating access mechanism with a single substrate-binding site intermittently exposed to either the cytosolic (c-state) or matrix (m-state) side of the inner mitochondrial membrane. In addition to its ADP:ATP antiporter activity, also involved in mitochondrial uncoupling and mitochondrial permeability transition pore (mPTP) activity. Plays a role in mitochondrial uncoupling by acting as a proton transporter: proton transport uncouples the proton flows via the electron transport chain and ATP synthase to reduce the efficiency of ATP production and cause mitochondrial thermogenesis. Proton transporter activity is inhibited by ADP:ATP antiporter activity, suggesting that SLC25A4/ANT1 acts as a master regulator of mitochondrial energy output by maintaining a delicate balance between ATP production (ADP:ATP antiporter activity) and thermogenesis (proton transporter activity). Proton transporter activity requires free fatty acids as cofactor, but does not transport it. Also plays a key role in mPTP opening, a non-specific pore that enables free passage of the mitochondrial membranes to solutes of up to 1.5 kDa, and which contributes to cell death. It is however unclear if SLC25A4/ANT1 constitutes a pore-forming component of mPTP or regulates it. Acts as a regulator of mitophagy independently of ADP:ATP antiporter activity: promotes mitophagy via interaction with TIMM44, leading to inhibit the presequence translocase TIMM23, thereby promoting stabilization of PINK1. The polypeptide is ADP/ATP translocase 1 (Rattus norvegicus (Rat)).